A 147-amino-acid chain; its full sequence is MFQGAIALSLDAKGRLAIPARHRDALVPDGAPLVITAHPHKCLLVYPLSAWEPIRDRIAAMPGFDPRTSAFKRLLVGFAQEEGLDAAGRVLLAGSLRQWAQLEKQVWLVGQGAHFELWSDAGWQAQQEAMLALTGDALPPGFESLAL.

2 SpoVT-AbrB domains span residues 5–50 (AIAL…PLSA) and 79–122 (AQEE…SDAG).

It belongs to the MraZ family. As to quaternary structure, forms oligomers.

Its subcellular location is the cytoplasm. The protein localises to the nucleoid. The protein is Transcriptional regulator MraZ of Aromatoleum aromaticum (strain DSM 19018 / LMG 30748 / EbN1) (Azoarcus sp. (strain EbN1)).